The sequence spans 120 residues: Ribonuclease P protein component (120 aa).

The protein belongs to the RnpA family. As to quaternary structure, consists of a catalytic RNA component (M1 or rnpB) and a protein subunit.

It catalyses the reaction Endonucleolytic cleavage of RNA, removing 5'-extranucleotides from tRNA precursor.. RNaseP catalyzes the removal of the 5'-leader sequence from pre-tRNA to produce the mature 5'-terminus. It can also cleave other RNA substrates such as 4.5S RNA. The protein component plays an auxiliary but essential role in vivo by binding to the 5'-leader sequence and broadening the substrate specificity of the ribozyme. The sequence is that of Ribonuclease P protein component from Acidothermus cellulolyticus (strain ATCC 43068 / DSM 8971 / 11B).